The sequence spans 347 residues: GMP reductase (347 aa).

108-131 (ADFIKLSEILAMSEELNFICIDIA) contacts NADP(+). Gly-181 and Gly-183 together coordinate K(+). Cys-186 (thioimidate intermediate) is an active-site residue. 216-239 (IIGDGGCSCAGDVAKAFGGGADFV) is an NADP(+) binding site.

This sequence belongs to the IMPDH/GMPR family. GuaC type 1 subfamily. As to quaternary structure, homotetramer.

It catalyses the reaction IMP + NH4(+) + NADP(+) = GMP + NADPH + 2 H(+). Catalyzes the irreversible NADPH-dependent deamination of GMP to IMP. It functions in the conversion of nucleobase, nucleoside and nucleotide derivatives of G to A nucleotides, and in maintaining the intracellular balance of A and G nucleotides. In Shewanella halifaxensis (strain HAW-EB4), this protein is GMP reductase.